Here is a 605-residue protein sequence, read N- to C-terminus: Alanine--tRNA ligase (605 aa).

His-463, His-467, Cys-565, and His-569 together coordinate Zn(2+).

This sequence belongs to the class-II aminoacyl-tRNA synthetase family. Zn(2+) is required as a cofactor.

It is found in the cytoplasm. It carries out the reaction tRNA(Ala) + L-alanine + ATP = L-alanyl-tRNA(Ala) + AMP + diphosphate. In terms of biological role, catalyzes the attachment of alanine to tRNA(Ala) in a two-step reaction: alanine is first activated by ATP to form Ala-AMP and then transferred to the acceptor end of tRNA(Ala). Also edits incorrectly charged Ser-tRNA(Ala) and Gly-tRNA(Ala) via its editing domain. The sequence is that of Alanine--tRNA ligase (alaS) from Treponema pallidum (strain Nichols).